A 120-amino-acid polypeptide reads, in one-letter code: Chaperonin GroEL (120 aa).

23–27 (DGTTT) lines the ATP pocket.

This sequence belongs to the chaperonin (HSP60) family. Forms a cylinder of 14 subunits composed of two heptameric rings stacked back-to-back. Interacts with the co-chaperonin GroES.

The protein localises to the cytoplasm. It catalyses the reaction ATP + H2O + a folded polypeptide = ADP + phosphate + an unfolded polypeptide.. Together with its co-chaperonin GroES, plays an essential role in assisting protein folding. The GroEL-GroES system forms a nano-cage that allows encapsulation of the non-native substrate proteins and provides a physical environment optimized to promote and accelerate protein folding. This is Chaperonin GroEL from Mycobacterium scrofulaceum.